Here is a 185-residue protein sequence, read N- to C-terminus: Ribosome-recycling factor (185 aa).

The protein belongs to the RRF family.

Its subcellular location is the cytoplasm. In terms of biological role, responsible for the release of ribosomes from messenger RNA at the termination of protein biosynthesis. May increase the efficiency of translation by recycling ribosomes from one round of translation to another. The polypeptide is Ribosome-recycling factor (Streptococcus sanguinis (strain SK36)).